A 159-amino-acid polypeptide reads, in one-letter code: D-aminoacyl-tRNA deacylase (159 aa).

The Gly-cisPro motif, important for rejection of L-amino acids signature appears at 142 to 143 (GP).

This sequence belongs to the DTD family. In terms of assembly, homodimer.

The protein localises to the cytoplasm. It catalyses the reaction glycyl-tRNA(Ala) + H2O = tRNA(Ala) + glycine + H(+). The enzyme catalyses a D-aminoacyl-tRNA + H2O = a tRNA + a D-alpha-amino acid + H(+). In terms of biological role, an aminoacyl-tRNA editing enzyme that deacylates mischarged D-aminoacyl-tRNAs. Also deacylates mischarged glycyl-tRNA(Ala), protecting cells against glycine mischarging by AlaRS. Acts via tRNA-based rather than protein-based catalysis; rejects L-amino acids rather than detecting D-amino acids in the active site. By recycling D-aminoacyl-tRNA to D-amino acids and free tRNA molecules, this enzyme counteracts the toxicity associated with the formation of D-aminoacyl-tRNA entities in vivo and helps enforce protein L-homochirality. The chain is D-aminoacyl-tRNA deacylase from Albidiferax ferrireducens (strain ATCC BAA-621 / DSM 15236 / T118) (Rhodoferax ferrireducens).